A 342-amino-acid polypeptide reads, in one-letter code: Sideroflexin-5 (342 aa).

Residues 1–24 (MADTATTASAASAAASASNASSDA) show a composition bias toward low complexity. A disordered region spans residues 1 to 29 (MADTATTASAASAAASASNASSDAPPFQL). The next 4 helical transmembrane spans lie at 105–125 (IFMP…VVGL), 165–185 (FIQG…GLNV), 256–276 (LTRV…MSML), and 289–309 (LLPV…PLAI).

This sequence belongs to the sideroflexin family. Specifically expressed in the brain.

The protein resides in the mitochondrion inner membrane. The catalysed reaction is citrate(in) = citrate(out). In terms of biological role, mitochondrial amino-acid transporter. Transports citrate. Does not act as a serine transporter: not able to mediate transport of serine into mitochondria. In brown adipose tissue, plays a role in the regulation of UCP1-dependent thermogenesis probably by supporting mitochondrial glycerol-3-phosphate utilization. The sequence is that of Sideroflexin-5 from Rattus norvegicus (Rat).